A 241-amino-acid polypeptide reads, in one-letter code: Probable transcriptional regulatory protein RALTA_A0859 (241 aa).

This sequence belongs to the TACO1 family.

It localises to the cytoplasm. In Cupriavidus taiwanensis (strain DSM 17343 / BCRC 17206 / CCUG 44338 / CIP 107171 / LMG 19424 / R1) (Ralstonia taiwanensis (strain LMG 19424)), this protein is Probable transcriptional regulatory protein RALTA_A0859.